We begin with the raw amino-acid sequence, 403 residues long: L-cysteine:1D-myo-inositol 2-amino-2-deoxy-alpha-D-glucopyranoside ligase (403 aa).

Cys-43 is a Zn(2+) binding site. L-cysteinyl-5'-AMP-binding positions include 43 to 46 (CGIT), Thr-58, and 81 to 83 (NTT). The 'HIGH' region motif lies at 45 to 55 (ITPYDATHLGH). Residues 183-188 (ERGGDP) carry the 'ERGGDP' region motif. Trp-223 contacts L-cysteinyl-5'-AMP. Cys-227 provides a ligand contact to Zn(2+). L-cysteinyl-5'-AMP is bound at residue 245-247 (GSD). Zn(2+) is bound at residue His-252. L-cysteinyl-5'-AMP is bound at residue Val-279. Residues 285–289 (KMSKS) carry the 'KMSKS' region motif.

The protein belongs to the class-I aminoacyl-tRNA synthetase family. MshC subfamily. As to quaternary structure, monomer. Zn(2+) serves as cofactor.

It catalyses the reaction 1D-myo-inositol 2-amino-2-deoxy-alpha-D-glucopyranoside + L-cysteine + ATP = 1D-myo-inositol 2-(L-cysteinylamino)-2-deoxy-alpha-D-glucopyranoside + AMP + diphosphate + H(+). Catalyzes the ATP-dependent condensation of GlcN-Ins and L-cysteine to form L-Cys-GlcN-Ins. The chain is L-cysteine:1D-myo-inositol 2-amino-2-deoxy-alpha-D-glucopyranoside ligase from Thermobispora bispora (strain ATCC 19993 / DSM 43833 / CBS 139.67 / JCM 10125 / KCTC 9307 / NBRC 14880 / R51).